We begin with the raw amino-acid sequence, 247 residues long: 2,3-bisphosphoglycerate-dependent phosphoglycerate mutase (247 aa).

Residues R8–N15, T21–G22, R60, E87–Y90, K98, R114–R115, and G183–N184 each bind substrate. The active-site Tele-phosphohistidine intermediate is H9. E87 (proton donor/acceptor) is an active-site residue.

The protein belongs to the phosphoglycerate mutase family. BPG-dependent PGAM subfamily.

The catalysed reaction is (2R)-2-phosphoglycerate = (2R)-3-phosphoglycerate. Its pathway is carbohydrate degradation; glycolysis; pyruvate from D-glyceraldehyde 3-phosphate: step 3/5. Its function is as follows. Catalyzes the interconversion of 2-phosphoglycerate and 3-phosphoglycerate. The chain is 2,3-bisphosphoglycerate-dependent phosphoglycerate mutase from Chlorobium limicola (strain DSM 245 / NBRC 103803 / 6330).